The sequence spans 121 residues: Chorion class A proteins Ld9 (121 aa).

Belongs to the chorion protein family.

In terms of biological role, this protein is one of many from the eggshell of the gypsy moth. The protein is Chorion class A proteins Ld9 of Lymantria dispar (Gypsy moth).